Consider the following 370-residue polypeptide: D-alanine--D-alanine ligase (370 aa).

Residues 144-352 (KKIFADAGIP…YGALIERLVD (209 aa)) enclose the ATP-grasp domain. 177 to 232 (EEVLTYPVFVKPANLGSSVGISKATNKKELVDAMTEAFLYDRRVVVEQGVVAREIE) provides a ligand contact to ATP. The Mg(2+) site is built by D306, E319, and N321.

It belongs to the D-alanine--D-alanine ligase family. It depends on Mg(2+) as a cofactor. Mn(2+) is required as a cofactor.

The protein localises to the cytoplasm. It carries out the reaction 2 D-alanine + ATP = D-alanyl-D-alanine + ADP + phosphate + H(+). It functions in the pathway cell wall biogenesis; peptidoglycan biosynthesis. Functionally, cell wall formation. The chain is D-alanine--D-alanine ligase from Listeria monocytogenes serovar 1/2a (strain ATCC BAA-679 / EGD-e).